The primary structure comprises 227 residues: Cleavage and polyadenylation specificity factor subunit 5 (227 aa).

Serine 2 carries the post-translational modification N-acetylserine. The necessary for RNA-binding stretch occupies residues 2–147 (SVVPPNRSQT…DWVIDDCIGN (146 aa)). Position 15 is an omega-N-methylarginine (arginine 15). 2 positions are modified to N6-acetyllysine: lysine 23 and lysine 29. Residue tyrosine 40 is modified to Phosphotyrosine. Lysine 56 bears the N6-acetyllysine mark. In terms of domain architecture, Nudix hydrolase spans 76-201 (MRRTVEGVLI…KLVAAPLFEL (126 aa)). Residues 81-160 (EGVLIVHEHR…PNFEPPQYPY (80 aa)) form a necessary for interactions with PAPOLA and PABPN1 region. The interaction with RNA stretch occupies residues 102 to 104 (TFF). Positions 109-130 (GELNPGEDEVEGLKRLMTEILG) match the Nudix box motif.

The protein belongs to the Nudix hydrolase family. CPSF5 subfamily. Homodimer (via N- and C-terminus); binds RNA as homodimer. Component of the cleavage factor Im (CFIm) complex which is a heterotetramer composed of two subunits of NUDT21/CPSF5 and two subunits of CPSF6 or CPSF7 or a heterodimer of CPSF6 and CPSF7. The cleavage factor Im (CFIm) complex associates with the CPSF and CSTF complexes to promote the assembly of the core mRNA 3'-processing machinery. Interacts with CPSF6 (via the RRM domain); this interaction is direct and enhances binding to RNA. Interacts with CPSF7. Interacts with FIP1L1; this interaction occurs in a RNA sequence-specific manner. Interacts with PABPN1. Interacts (via N-terminus) with PAPOLA (via C-terminus); this interaction is direct and diminished by acetylation. Interacts with SNRNP70. Interacts with VIRMA. In terms of processing, acetylated mainly by p300/CBP, recruited to the complex by CPSF6. Acetylation decreases interaction with PAPAO. Deacetylated by the class I/II HDACs, HDAC1, HDAC3 and HDAC10, and by the class III HDACs, SIRT1 and SIRT2.

Its subcellular location is the nucleus. The protein localises to the cytoplasm. In terms of biological role, component of the cleavage factor Im (CFIm) complex that functions as an activator of the pre-mRNA 3'-end cleavage and polyadenylation processing required for the maturation of pre-mRNA into functional mRNAs. CFIm contributes to the recruitment of multiprotein complexes on specific sequences on the pre-mRNA 3'-end, so called cleavage and polyadenylation signals (pA signals). Most pre-mRNAs contain multiple pA signals, resulting in alternative cleavage and polyadenylation (APA) producing mRNAs with variable 3'-end formation. The CFIm complex acts as a key regulator of cleavage and polyadenylation site choice during APA through its binding to 5'-UGUA-3' elements localized in the 3'-untranslated region (UTR) for a huge number of pre-mRNAs. NUDT21/CPSF5 activates indirectly the mRNA 3'-processing machinery by recruiting CPSF6 and/or CPSF7. Binds to 5'-UGUA-3' elements localized upstream of pA signals that act as enhancers of pre-mRNA 3'-end processing. The homodimer mediates simultaneous sequence-specific recognition of two 5'-UGUA-3' elements within the pre-mRNA. Plays a role in somatic cell fate transitions and pluripotency by regulating widespread changes in gene expression through an APA-dependent function. Binds to chromatin. Binds to, but does not hydrolyze mono- and di-adenosine nucleotides. The chain is Cleavage and polyadenylation specificity factor subunit 5 (NUDT21) from Bos taurus (Bovine).